A 112-amino-acid chain; its full sequence is K(+)/H(+) antiporter modulator KhtS (112 aa).

The segment at Tyr42–His64 is disordered. Polar residues predominate over residues Ser47–Pro60.

It is found in the cell membrane. Modulates the activity of the potassium/proton antiporter KhtU. Involved in protection of the cell from methylglyoxal, a toxic by-product of glycolysis. In Bacillus subtilis (strain 168), this protein is K(+)/H(+) antiporter modulator KhtS.